The sequence spans 507 residues: Chromosomal replication initiator protein DnaA (507 aa).

A domain I, interacts with DnaA modulators region spans residues 1 to 112 (MTDDPGSGFT…PATDEADDTT (112 aa)). The interval 99–155 (RIAPPATDEADDTTVPPSENPATTSPDTTTDNDEIDDSAAARGDNQHSWPSYFTERP) is disordered. Residues 113–127 (VPPSENPATTSPDTT) show a composition bias toward polar residues. The tract at residues 113–166 (VPPSENPATTSPDTTTDNDEIDDSAAARGDNQHSWPSYFTERPHNTDSATAGVT) is domain II. Residues 167–383 (SLNRRYTFDT…GALIRVTAFA (217 aa)) are domain III, AAA+ region. 4 residues coordinate ATP: Gly-211, Gly-213, Lys-214, and Thr-215. Residues 384 to 507 (SLNKTPIDKA…TTRIRQRSKR (124 aa)) are domain IV, binds dsDNA.

Belongs to the DnaA family. Oligomerizes as a right-handed, spiral filament on DNA at oriC.

It localises to the cytoplasm. Plays an essential role in the initiation and regulation of chromosomal replication. ATP-DnaA binds to the origin of replication (oriC) to initiate formation of the DNA replication initiation complex once per cell cycle. Binds the DnaA box (a 9 base pair repeat at the origin) and separates the double-stranded (ds)DNA. Forms a right-handed helical filament on oriC DNA; dsDNA binds to the exterior of the filament while single-stranded (ss)DNA is stabiized in the filament's interior. The ATP-DnaA-oriC complex binds and stabilizes one strand of the AT-rich DNA unwinding element (DUE), permitting loading of DNA polymerase. After initiation quickly degrades to an ADP-DnaA complex that is not apt for DNA replication. Binds acidic phospholipids. This chain is Chromosomal replication initiator protein DnaA, found in Mycobacterium tuberculosis (strain ATCC 25177 / H37Ra).